We begin with the raw amino-acid sequence, 466 residues long: Purple acid phosphatase 25 (466 aa).

Residues 1 to 21 (MRMNKILLVFVFLSIATVINS) form the signal peptide. Residue D164 participates in Fe cation binding. N172 carries N-linked (GlcNAc...) asparagine glycosylation. The Fe cation site is built by D192 and Y195. D192 lines the Zn(2+) pocket. Residues N229 and H314 each contribute to the Zn(2+) site. N229 serves as a coordination point for substrate. Residue H324 is the Proton donor of the active site. Position 351 (H351) interacts with Zn(2+). 351-353 (HVH) provides a ligand contact to substrate. H353 is a binding site for Fe cation. Residues N367 and N424 are each glycosylated (N-linked (GlcNAc...) asparagine).

Belongs to the metallophosphoesterase superfamily. Purple acid phosphatase family. Homodimer. The cofactor is Fe cation. Zn(2+) is required as a cofactor. Specifically expressed in flowers.

The protein resides in the secreted. It carries out the reaction a phosphate monoester + H2O = an alcohol + phosphate. This chain is Purple acid phosphatase 25 (PAP25), found in Arabidopsis thaliana (Mouse-ear cress).